Here is a 239-residue protein sequence, read N- to C-terminus: U-scoloptoxin(11)-Sm3a (239 aa).

A signal peptide spans 1 to 16 (MINFLLLVLILSVLES).

The protein belongs to the scoloptoxin-11 family. In terms of processing, contains 9 disulfide bonds. In terms of tissue distribution, expressed by the venom gland.

Its subcellular location is the secreted. This chain is U-scoloptoxin(11)-Sm3a, found in Scolopendra morsitans (Tanzanian blue ringleg centipede).